A 409-amino-acid polypeptide reads, in one-letter code: Probable tRNA N6-adenosine threonylcarbamoyltransferase, mitochondrial (409 aa).

The N-terminal 31 residues, 1-31 (MHALRNFAGNGIANVFGCGIRRRLSYVLGIE), are a transit peptide targeting the mitochondrion. The a divalent metal cation site is built by histidine 135 and histidine 139. Substrate-binding positions include 159 to 163 (LASGG), aspartate 192, glycine 212, glutamate 216, 322 to 323 (NN), and serine 350. Position 351 (aspartate 351) interacts with a divalent metal cation.

The protein belongs to the KAE1 / TsaD family. As to quaternary structure, homodimer. The cofactor is a divalent metal cation.

It is found in the mitochondrion. It catalyses the reaction L-threonylcarbamoyladenylate + adenosine(37) in tRNA = N(6)-L-threonylcarbamoyladenosine(37) in tRNA + AMP + H(+). Its function is as follows. Required for the formation of a threonylcarbamoyl group on adenosine at position 37 (t(6)A37) in mitochondrial tRNAs that read codons beginning with adenine. Probably involved in the transfer of the threonylcarbamoyl moiety of threonylcarbamoyl-AMP (TC-AMP) to the N6 group of A37. Involved in mitochondrial genome maintenance. This chain is Probable tRNA N6-adenosine threonylcarbamoyltransferase, mitochondrial, found in Drosophila melanogaster (Fruit fly).